Here is a 646-residue protein sequence, read N- to C-terminus: MSSRKQARLEAKQFIDTLSVQPYPNSTKVYIEGSRPDIRVPMREISLADSLIGGTKEAPIFEPNEPVRVYDTSGVYTDPDYAIDLYSGLPKLREGWIEERNDTEILEDVSSVYAKERLDDETLDDLRYGNLPRIRRAKAGKCVTQLHYARKGIVTPEMEYIALRENMGRAQYRDDVLTQQHPGQSFGANLPKDITAEFVRKEVAEGRAIIPSNINHPESEPMIIGRNFLVKVNANIGNSSVTSSIEEEVEKLVWATRWGGDTVMDLSTGRNIHETREWILRNSPVPIGTVPMYQALEKVNGIAENLNWEVMRDTLIEQAEQGVDYFTIHAGLLLRYVPMTAKRVTGIVSRGGSIIAKWCLAHHQESFLYTHFREICEICAKYDVALSLGDGLRPGSVADANDEAQFAELRTLGELTKIAWEYDVQVIIEGPGHIPMHMIKENMDQQLEHCHEAPFYTLGPLTTDIAPGYDHITSGIGAAMIGWYGCAMLCYVTPKEHLGLPNKEDVKTGMITYKLAAHAADLAKGHPGAQVRDNALSKARFEFRWEDQFNLALDPDTARAFHDETLPQESGKVAHFCSMCGPKFCSMKISQEVREYAKDTEQVAADQAISIKMLDDPLEGMRKKSEEFRATGSELYHPAVHAEADE.

Substrate is bound by residues asparagine 235, methionine 264, tyrosine 293, histidine 329, 349 to 351 (SRG), 390 to 393 (DGLR), and glutamate 429. Histidine 433 contacts Zn(2+). Position 456 (tyrosine 456) interacts with substrate. Histidine 497 is a binding site for Zn(2+). 3 residues coordinate [4Fe-4S] cluster: cysteine 577, cysteine 580, and cysteine 585. Residues 624-646 (KSEEFRATGSELYHPAVHAEADE) form a disordered region.

The protein belongs to the ThiC family. As to quaternary structure, homodimer. [4Fe-4S] cluster is required as a cofactor.

It catalyses the reaction 5-amino-1-(5-phospho-beta-D-ribosyl)imidazole + S-adenosyl-L-methionine = 4-amino-2-methyl-5-(phosphooxymethyl)pyrimidine + CO + 5'-deoxyadenosine + formate + L-methionine + 3 H(+). It functions in the pathway cofactor biosynthesis; thiamine diphosphate biosynthesis. Functionally, catalyzes the synthesis of the hydroxymethylpyrimidine phosphate (HMP-P) moiety of thiamine from aminoimidazole ribotide (AIR) in a radical S-adenosyl-L-methionine (SAM)-dependent reaction. This Vibrio parahaemolyticus serotype O3:K6 (strain RIMD 2210633) protein is Phosphomethylpyrimidine synthase.